Here is a 333-residue protein sequence, read N- to C-terminus: 4-hydroxy-3-methylbut-2-enyl diphosphate reductase (333 aa).

Cys20 contributes to the [4Fe-4S] cluster binding site. The (2E)-4-hydroxy-3-methylbut-2-enyl diphosphate site is built by His49 and His85. Dimethylallyl diphosphate contacts are provided by His49 and His85. Isopentenyl diphosphate is bound by residues His49 and His85. Cys107 contributes to the [4Fe-4S] cluster binding site. Residue His135 participates in (2E)-4-hydroxy-3-methylbut-2-enyl diphosphate binding. His135 lines the dimethylallyl diphosphate pocket. Position 135 (His135) interacts with isopentenyl diphosphate. Glu137 functions as the Proton donor in the catalytic mechanism. Thr176 contributes to the (2E)-4-hydroxy-3-methylbut-2-enyl diphosphate binding site. Cys206 lines the [4Fe-4S] cluster pocket. Positions 234, 235, 236, and 279 each coordinate (2E)-4-hydroxy-3-methylbut-2-enyl diphosphate. Ser234, Ser235, Asn236, and Ser279 together coordinate dimethylallyl diphosphate. Residues Ser234, Ser235, Asn236, and Ser279 each contribute to the isopentenyl diphosphate site.

Belongs to the IspH family. [4Fe-4S] cluster serves as cofactor.

The enzyme catalyses isopentenyl diphosphate + 2 oxidized [2Fe-2S]-[ferredoxin] + H2O = (2E)-4-hydroxy-3-methylbut-2-enyl diphosphate + 2 reduced [2Fe-2S]-[ferredoxin] + 2 H(+). The catalysed reaction is dimethylallyl diphosphate + 2 oxidized [2Fe-2S]-[ferredoxin] + H2O = (2E)-4-hydroxy-3-methylbut-2-enyl diphosphate + 2 reduced [2Fe-2S]-[ferredoxin] + 2 H(+). Its pathway is isoprenoid biosynthesis; dimethylallyl diphosphate biosynthesis; dimethylallyl diphosphate from (2E)-4-hydroxy-3-methylbutenyl diphosphate: step 1/1. It functions in the pathway isoprenoid biosynthesis; isopentenyl diphosphate biosynthesis via DXP pathway; isopentenyl diphosphate from 1-deoxy-D-xylulose 5-phosphate: step 6/6. Its function is as follows. Catalyzes the conversion of 1-hydroxy-2-methyl-2-(E)-butenyl 4-diphosphate (HMBPP) into a mixture of isopentenyl diphosphate (IPP) and dimethylallyl diphosphate (DMAPP). Acts in the terminal step of the DOXP/MEP pathway for isoprenoid precursor biosynthesis. This is 4-hydroxy-3-methylbut-2-enyl diphosphate reductase from Rhizobium leguminosarum bv. trifolii (strain WSM2304).